The sequence spans 461 residues: Cysteine--tRNA ligase (461 aa).

Zn(2+) is bound at residue Cys28. The 'HIGH' region motif lies at 30 to 40; that stretch reads ITVYDLCHIGH. Positions 209, 234, and 238 each coordinate Zn(2+). Positions 266–270 match the 'KMSKS' region motif; sequence KMSKS. Lys269 is an ATP binding site.

The protein belongs to the class-I aminoacyl-tRNA synthetase family. As to quaternary structure, monomer. Zn(2+) is required as a cofactor.

It is found in the cytoplasm. The catalysed reaction is tRNA(Cys) + L-cysteine + ATP = L-cysteinyl-tRNA(Cys) + AMP + diphosphate. The chain is Cysteine--tRNA ligase from Salmonella agona (strain SL483).